A 311-amino-acid chain; its full sequence is 2-dehydro-3-deoxygluconokinase (311 aa).

Residues 34–35 (GS), 106–108 (YYR), and arginine 166 contribute to the substrate site. Residues 164-166 (NIR), 224-229 (KLGPKG), 253-256 (GAGD), and serine 283 contribute to the ATP site. Residues glycine 253 and aspartate 256 each contribute to the substrate site. The Proton acceptor role is filled by aspartate 256. Aspartate 292 serves as a coordination point for substrate.

It belongs to the carbohydrate kinase PfkB family. Homotetramer. A divalent metal cation serves as cofactor.

It catalyses the reaction 2-dehydro-3-deoxy-D-gluconate + ATP = 2-dehydro-3-deoxy-6-phospho-D-gluconate + ADP + H(+). It functions in the pathway carbohydrate acid metabolism; 2-dehydro-3-deoxy-D-gluconate degradation; D-glyceraldehyde 3-phosphate and pyruvate from 2-dehydro-3-deoxy-D-gluconate: step 1/2. Involved in the degradation of glucose via the semi-phosphorylative Entner-Doudoroff pathway. Catalyzes the phosphorylation of 2-keto-3-deoxygluconate (KDG) to produce 2-keto-3-deoxy-6-phosphogluconate (KDPG). Can also use GTP, but not ADP or AMP, as a phosphoryl donor and 2-keto-D-gluconate (KG) as a phosphoryl acceptor. The polypeptide is 2-dehydro-3-deoxygluconokinase (Sulfurisphaera tokodaii (strain DSM 16993 / JCM 10545 / NBRC 100140 / 7) (Sulfolobus tokodaii)).